The chain runs to 295 residues: G1/S-specific cyclin-D1 (295 aa).

The Cyclin N-terminal domain occupies Leu-28–Leu-152. Residues Ala-262 to Ile-295 form a disordered region. A Glycyl lysine isopeptide (Lys-Gly) (interchain with G-Cter in ubiquitin) cross-link involves residue Lys-269. Over residues Glu-272–Asp-282 the composition is skewed to acidic residues. The residue at position 286 (Thr-286) is a Phosphothreonine.

It belongs to the cyclin family. Cyclin D subfamily. In terms of assembly, interacts with either CDK4 or CDK6 protein kinase to form a serine/threonine kinase holoenzyme complex. The cyclin subunit imparts substrate specificity to the complex. Component of the ternary complex CCND1/CDK4/CDKN1B required for nuclear translocation and modulation of CDK4-mediated kinase activity. Interacts directly with CDKN1B. Can form similar complexes with either CDKN1A or CDKN2A. Interacts with UHRF2; the interaction ubiquitinates CCND1 and appears to occur independently of phosphorylation. Interacts with USP2. Interacts (via cyclin N-terminal domain) with INSM1 (via N-terminal region); the interaction competes with the binding of CCND1 to CDK4 during cell cycle progression and inhibits CDK4 activity. Interacts with CDK4; the interaction is prevented with the binding of CCND1 to INSM1 during cell cycle progression. Post-translationally, phosphorylation at Thr-286 by MAP kinases is required for ubiquitination and degradation by the DCX(AMBRA1) complex. It also plays an essential role for recognition by the FBXO31 component of SCF (SKP1-cullin-F-box) protein ligase complex following DNA damage. In terms of processing, ubiquitinated at Lys-269 by the DCX(AMBRA1) complex during the transition from G1 to S cell phase, leading to its degradation: ubiquitination is dependent on Thr-286 phosphorylation. The DCX(AMBRA1) complex represents the major regulator of CCND1 stability during the G1/S transition. Also ubiquitinated by the SCF(FBXO4) and Cul7-RING(FBXW8) ubiquitin-protein ligase complexes. Following DNA damage it is ubiquitinated by the SCF(FBXO31) protein ligase complex. SCF(FBXO31) ubiquitination is dependent on Thr-286 phosphorylation. Ubiquitinated also by UHRF2 apparently in a phosphorylation-independent manner. Ubiquitination leads to its degradation and G1 arrest. Deubiquitinated by USP2; leading to its stabilization.

The protein localises to the nucleus. The protein resides in the cytoplasm. It localises to the nucleus membrane. In terms of biological role, regulatory component of the cyclin D1-CDK4 (DC) complex that phosphorylates and inhibits members of the retinoblastoma (RB) protein family including RB1 and regulates the cell-cycle during G(1)/S transition. Phosphorylation of RB1 allows dissociation of the transcription factor E2F from the RB/E2F complex and the subsequent transcription of E2F target genes which are responsible for the progression through the G(1) phase. Hypophosphorylates RB1 in early G(1) phase. Cyclin D-CDK4 complexes are major integrators of various mitogenenic and antimitogenic signals. Also a substrate for SMAD3, phosphorylating SMAD3 in a cell-cycle-dependent manner and repressing its transcriptional activity. Component of the ternary complex, cyclin D1/CDK4/CDKN1B, required for nuclear translocation and activity of the cyclin D-CDK4 complex. Exhibits transcriptional corepressor activity with INSM1 on the NEUROD1 and INS promoters in a cell cycle-independent manner. The protein is G1/S-specific cyclin-D1 (CCND1) of Pongo abelii (Sumatran orangutan).